The following is a 514-amino-acid chain: Bifunctional purine biosynthesis protein PurH (514 aa).

Residues 1-145 form the MGS-like domain; sequence MIKRALISVS…KNYQDVVVIV (145 aa).

Belongs to the PurH family.

The catalysed reaction is (6R)-10-formyltetrahydrofolate + 5-amino-1-(5-phospho-beta-D-ribosyl)imidazole-4-carboxamide = 5-formamido-1-(5-phospho-D-ribosyl)imidazole-4-carboxamide + (6S)-5,6,7,8-tetrahydrofolate. It catalyses the reaction IMP + H2O = 5-formamido-1-(5-phospho-D-ribosyl)imidazole-4-carboxamide. It participates in purine metabolism; IMP biosynthesis via de novo pathway; 5-formamido-1-(5-phospho-D-ribosyl)imidazole-4-carboxamide from 5-amino-1-(5-phospho-D-ribosyl)imidazole-4-carboxamide (10-formyl THF route): step 1/1. The protein operates within purine metabolism; IMP biosynthesis via de novo pathway; IMP from 5-formamido-1-(5-phospho-D-ribosyl)imidazole-4-carboxamide: step 1/1. This Acetivibrio thermocellus (strain ATCC 27405 / DSM 1237 / JCM 9322 / NBRC 103400 / NCIMB 10682 / NRRL B-4536 / VPI 7372) (Clostridium thermocellum) protein is Bifunctional purine biosynthesis protein PurH.